A 425-amino-acid chain; its full sequence is Histidinol dehydrogenase (425 aa).

Residues Y124, Q184, and N207 each coordinate NAD(+). S230, Q252, and H255 together coordinate substrate. Zn(2+) contacts are provided by Q252 and H255. Catalysis depends on proton acceptor residues E321 and H322. Residues H322, D355, E409, and H414 each contribute to the substrate site. D355 provides a ligand contact to Zn(2+). H414 is a Zn(2+) binding site.

It belongs to the histidinol dehydrogenase family. Zn(2+) serves as cofactor.

It carries out the reaction L-histidinol + 2 NAD(+) + H2O = L-histidine + 2 NADH + 3 H(+). Its pathway is amino-acid biosynthesis; L-histidine biosynthesis; L-histidine from 5-phospho-alpha-D-ribose 1-diphosphate: step 9/9. Functionally, catalyzes the sequential NAD-dependent oxidations of L-histidinol to L-histidinaldehyde and then to L-histidine. In Halobacterium salinarum (strain ATCC 700922 / JCM 11081 / NRC-1) (Halobacterium halobium), this protein is Histidinol dehydrogenase.